A 239-amino-acid polypeptide reads, in one-letter code: VETISFSFSEFEPGNDNLTLQGAALITQSGVLQLTKINQNGMPAWDSTGRTLYTKPVHMWDSTTGTVASFETRFSFSIEQPYTRPLPADGLVFFMGPTKSKPAQGYGYLGVFNNSKQDNSYQTLAVEFDTFSNPWDPPQVPHIGIDVNSIRSIKTQPFQLDNGQVANVVIKYDAPSKILHVVLVYPSSGAIYTIAEIVDVKQVLPDWVDVGLSGATGAQRDAAETHDVYSWSFQASLPE.

Asn-17 and Asn-113 each carry an N-linked (GlcNAc...) asparagine glycan.

This sequence belongs to the leguminous lectin family. As to quaternary structure, homodimer.

Its function is as follows. Galactose and N-acetyllactosamine specific lectin. The chain is Lectin from Erythrina crista-galli (Cockspur coral tree).